The primary structure comprises 291 residues: Alpha/beta-gliadin A-II (291 aa).

The N-terminal stretch at 1–20 (MKTFPILALLAIVATTATTA) is a signal peptide. The segment covering 32-55 (NPSQQQPQEQVPLVQEQQFQGQQQ) has biased composition (low complexity). Disordered regions lie at residues 32-120 (NPSQ…QQQQ) and 227-250 (QQYP…GSFQ). 2 stretches are compositionally biased toward pro residues: residues 56–71 (PFPP…PFPS) and 81–104 (FPQP…PQPQ). Composition is skewed to low complexity over residues 105 to 120 (PQYS…QQQQ) and 227 to 237 (QQYPSGQGFFQ). A compositionally biased stretch (polar residues) spans 238–250 (PSQQNPQAQGSFQ).

It belongs to the gliadin/glutenin family. Substrate of transglutaminase.

Functionally, gliadin is the major seed storage protein in wheat. The protein is Alpha/beta-gliadin A-II of Triticum aestivum (Wheat).